The chain runs to 105 residues: MSDSEYLTRAEAVLAAIERSLDDADADIEFERSGNVLTLEFENGTKIIVNLQPPMQEIWIAAKSGGYHFRFVDGEWRDTRNGTEFYAALSEYATQQAGEPVEIAP.

This sequence belongs to the frataxin family.

In terms of biological role, involved in iron-sulfur (Fe-S) cluster assembly. May act as a regulator of Fe-S biogenesis. The sequence is that of Iron-sulfur cluster assembly protein CyaY from Paraburkholderia phymatum (strain DSM 17167 / CIP 108236 / LMG 21445 / STM815) (Burkholderia phymatum).